A 125-amino-acid chain; its full sequence is Succinate dehydrogenase assembly factor 3, mitochondrial (125 aa).

A mitochondrion-targeting transit peptide spans 1 to 30 (MTGRHVSRVRSLYRRILQLHRALPPDLKAL).

The protein belongs to the complex I LYR family. SDHAF3 subfamily. As to quaternary structure, interacts with Sdhb within an Sdha-Sdhb subcomplex.

The protein localises to the mitochondrion matrix. Its function is as follows. Plays an essential role in the assembly of succinate dehydrogenase (SDH), an enzyme complex (also referred to as respiratory complex II) that is a component of both the tricarboxylic acid (TCA) cycle and the mitochondrial electron transport chain, and which couples the oxidation of succinate to fumarate with the reduction of ubiquinone (coenzyme Q) to ubiquinol. Promotes maturation of the iron-sulfur protein subunit Sdhb of the SDH catalytic dimer, protecting it from the deleterious effects of oxidants. May act together with SDHAF1. This chain is Succinate dehydrogenase assembly factor 3, mitochondrial, found in Rattus norvegicus (Rat).